A 417-amino-acid chain; its full sequence is MALNVSKVVPNSPILVKSVNASRSRRVLLAYVHHPLAANKGSSIEELKQGLCCTKTVTFVSSRRCSTLCFVGKSQDTETNSQVVQKEGEKQVMPRRKSSNSSQLLVEYVSNDAKFVNERARNDFVLLSRGIMRLDARARQDVAILGSGFLKLDARAREDTEKIDRDVKRKAERLHHIATIFKNIAESKLKNAADKHWSDGALEADLRRADFRAKQRAMEDALMALEFIKNIHDMMVNKMVDSLVTSETGTTDRISLEKNGIALGFFPGEVSSDRISAIEEAYKSMASALSEADGIDYTDPEELELLVTTLIDLDAMDGKSSASLLAECSSSPDVNTRKALANALAAAPSMWTLGNAGMGALQRLAEDSNPAIAAAASRAINALKKQWEVEEGDSLRFMMNFERPNDDDDVDSDLDEI.

The transit peptide at 1–36 (MALNVSKVVPNSPILVKSVNASRSRRVLLAYVHHPL) directs the protein to the chloroplast.

The protein belongs to the ATA15/OSA15 family. In terms of tissue distribution, expressed in leaves. Expressed in 7-day-old seedlings, roots, rosette leaves, cauline leaves and flower buds.

It localises to the plastid. Its subcellular location is the chloroplast. Functionally, involved in modulation of redox homeostasis to regulate leaf senescence mediated by age and stress factors during plant development. Its function is dependent of EIN2, a central factor of ethylene signaling. The sequence is that of Senescence-associated protein AAF, chloroplastic from Arabidopsis thaliana (Mouse-ear cress).